A 261-amino-acid polypeptide reads, in one-letter code: Transcription repressor OFP15 (261 aa).

Residues 1–28 (MKLPFLNKNHSTSSYSSNSSSSSWPWPS) form a disordered region. Over residues 11–28 (STSSYSSNSSSSSWPWPS) the composition is skewed to low complexity. The 61-residue stretch at 112 to 172 (FSLESDDPYS…FAAFVDLLMN (61 aa)) folds into the OVATE domain.

As to quaternary structure, interacts with BLH1 and BLH3. Expressed in roots, cauline leaves, shoots, flower buds and siliques.

The protein localises to the nucleus. Functionally, transcriptional repressor that regulates multiple aspects of plant growth and development through the regulation of BEL1-LIKE (BLH) and KNOX TALE (KNAT) homeodomain transcription factors. The chain is Transcription repressor OFP15 (OFP15) from Arabidopsis thaliana (Mouse-ear cress).